A 156-amino-acid chain; its full sequence is 2-C-methyl-D-erythritol 2,4-cyclodiphosphate synthase (156 aa).

Residues Asp-9 and His-11 each coordinate a divalent metal cation. 4-CDP-2-C-methyl-D-erythritol 2-phosphate is bound by residues 9-11 and 35-36; these read DAH and HS. His-43 lines the a divalent metal cation pocket. A 4-CDP-2-C-methyl-D-erythritol 2-phosphate-binding site is contributed by 57 to 59; that stretch reads DIG.

This sequence belongs to the IspF family. Homotrimer. It depends on a divalent metal cation as a cofactor.

It carries out the reaction 4-CDP-2-C-methyl-D-erythritol 2-phosphate = 2-C-methyl-D-erythritol 2,4-cyclic diphosphate + CMP. It participates in isoprenoid biosynthesis; isopentenyl diphosphate biosynthesis via DXP pathway; isopentenyl diphosphate from 1-deoxy-D-xylulose 5-phosphate: step 4/6. Its function is as follows. Involved in the biosynthesis of isopentenyl diphosphate (IPP) and dimethylallyl diphosphate (DMAPP), two major building blocks of isoprenoid compounds. Catalyzes the conversion of 4-diphosphocytidyl-2-C-methyl-D-erythritol 2-phosphate (CDP-ME2P) to 2-C-methyl-D-erythritol 2,4-cyclodiphosphate (ME-CPP) with a corresponding release of cytidine 5-monophosphate (CMP). The chain is 2-C-methyl-D-erythritol 2,4-cyclodiphosphate synthase from Hydrogenobaculum sp. (strain Y04AAS1).